Here is a 287-residue protein sequence, read N- to C-terminus: MPDELKPHFANVQAHYDLSDDFFRLFLDPTQTYSCAYFERDDMTLQEAQIAKIDLALGKLGLQPGMTLLDVGCGWGATMMRAVEKYDVNVVGLTLSKNQANHVQQLVANSENLRSKRVLLAGWEQFDEPVDRIVSIGAFEHFGHERYDAFFSLAHRLLPADGVMLLHTITGLHPKEIHERGLPMSFTFARFLKFIVTEIFPGGRLPSIPMVQECASANGFTVTRVQSLQPHYAKTLDLWSAALQANKGQAIALQSEEVYERYMKYLTGCAEMFRIGYIDVNQFTCQK.

S-adenosyl-L-methionine contacts are provided by residues Tyr33–Ser34, Leu68–Gly76, Thr94–Gln99, and Trp123–Glu124. The active site involves Cys269.

It belongs to the CFA/CMAS family. Homodimer.

Its subcellular location is the cytoplasm. The catalysed reaction is a 1-acyl-2-(9Z)-enoyl-sn-glycero-3-phospholipid + S-adenosyl-L-methionine = a 1-acyl-2-(9-cyclopronane)-acyl-sn-glycero-3-phospholipid + S-adenosyl-L-homocysteine + H(+). Its pathway is lipid metabolism; mycolic acid biosynthesis. In terms of biological role, catalyzes the conversion of a double bond to a cyclopropane ring at the distal position of an alpha mycolic acid via the transfer of a methylene group from S-adenosyl-L-methionine. Cyclopropanated mycolic acids are key factors participating in cell envelope permeability, host immunomodulation and persistence. The polypeptide is Cyclopropane mycolic acid synthase 1 (cmaA1) (Mycobacterium tuberculosis (strain ATCC 25177 / H37Ra)).